The following is a 751-amino-acid chain: MAVLALHAVFGIFIYFSSVKGSSQPQARVFLTFNELQETKTSEYHRISHSPLDYRILLMDEDQDRIYVGSKDHILSLNINNISQDPLSIFWPASANKVEECKMAGKDPTHGCGNFVRVIQSYNRTHLYVCGSGAFSPVCVYVNRGRRSEEQIFKIDSKCESGKGRCSFNPNVNTVSVMINEELFSGMYIDFMGTDAAIFRSLTKRNAVRTDQHNSKWLSEPIFVDAHVIPDGTDPNDAKIYFFFKERLTDNSGSTKQIHSMIARICPNDTGGQRSLVNKWTTFLKARLVCSVMDEDGTETYFDELEDVFLLETDNPRTTLVYGIFTTSSSIFKGSAVCVYHLSDIQTVFNGPFAHKEGPNHQLIPYQGRIPYPRPGTCPGGAFTPNMRTTKEFPDDVVTFIRNHPLMYNPIYPIHKRPLIIRIGTDYKYTKIAVDRVNAADGRCHVLFLGTDQGTVQKVVVLPTNFSASGELILEELEVFQSNSPITTMKISSKKQQLYVSSEEGVTQVPLHRCRIYGTACADCCLARDPYCAWDGNSCSRFYPTGKRRSRRQDVRHGNPLTQCRGFNLKAYRNAAETVQYGVKNNTTFLECTPKSPQASIKWLLQKDNDRRKEVKLSERIIATEQGLLIRSVQDSDRGLYHCIATENNFKQTLAKINFKVLDTEMVAYMTDKWSPWTWASSVRALQFHPKDFVGAFSHSEMQMINQYCKDSRQQGQRREEPQKMRGDYSKLKALINSRKSRNRRNQLPAS.

The signal sequence occupies residues methionine 1–glycine 21. The Sema domain maps to arginine 28–leucine 511. Residue asparagine 81 is glycosylated (N-linked (GlcNAc...) asparagine). Residues cysteine 101 and cysteine 112 are joined by a disulfide bond. N-linked (GlcNAc...) asparagine glycosylation is present at asparagine 123. 3 disulfides stabilise this stretch: cysteine 130-cysteine 139, cysteine 266-cysteine 378, and cysteine 290-cysteine 338. An N-linked (GlcNAc...) asparagine glycan is attached at asparagine 268. Residue asparagine 465 is glycosylated (N-linked (GlcNAc...) asparagine). A disulfide bond links cysteine 514 and cysteine 532. One can recognise an Ig-like C2-type domain in the interval alanine 571–alanine 655. Asparagine 585 and asparagine 586 each carry an N-linked (GlcNAc...) asparagine glycan. Cysteine 643 and cysteine 709 are oxidised to a cystine. Positions serine 712–lysine 731 are enriched in basic and acidic residues. A disordered region spans residues serine 712–serine 751.

This sequence belongs to the semaphorin family. Collapsin-1, -2, -3, and -5 bind to overlapping but distinct axon tracts.

The protein localises to the secreted. Functionally, induces the collapse and paralysis of neuronal growth cones. Could potentially act as repulsive cues toward specific neuronal populations. Binds to neuropilin. This chain is Semaphorin-3C (SEMA3C), found in Gallus gallus (Chicken).